Here is a 314-residue protein sequence, read N- to C-terminus: Homoserine kinase (314 aa).

Position 97–107 (97–107 (PPARGMGSSAT)) interacts with ATP.

It belongs to the GHMP kinase family. Homoserine kinase subfamily.

The protein resides in the cytoplasm. It carries out the reaction L-homoserine + ATP = O-phospho-L-homoserine + ADP + H(+). It functions in the pathway amino-acid biosynthesis; L-threonine biosynthesis; L-threonine from L-aspartate: step 4/5. Its function is as follows. Catalyzes the ATP-dependent phosphorylation of L-homoserine to L-homoserine phosphate. The sequence is that of Homoserine kinase from Synechococcus sp. (strain RCC307).